A 329-amino-acid polypeptide reads, in one-letter code: Chlorophyllase-1, chloroplastic (329 aa).

A chloroplast-targeting transit peptide spans methionine 1–threonine 21. A GXSXG motif is present at residues glycine 145–glycine 149. Serine 147 acts as the Nucleophile in catalysis. Residues aspartate 169 and histidine 242 each act as charge relay system in the active site.

The protein belongs to the AB hydrolase superfamily. Lipase family.

The protein resides in the plastid. Its subcellular location is the chloroplast. The catalysed reaction is a chlorophyll + H2O = a chlorophyllide + phytol + H(+). It functions in the pathway porphyrin-containing compound metabolism; chlorophyll degradation. Functionally, catalyzes the hydrolysis of ester bond in chlorophyll to yield chlorophyllide and phytol. The polypeptide is Chlorophyllase-1, chloroplastic (Citrus unshiu (Satsuma mandarin)).